The primary structure comprises 518 residues: F-box protein At1g47056 (518 aa).

Positions 37 to 82 constitute an F-box domain; it reads PDYTSSLPDECLALVFQFLNSGNRKRCALVCRRWMIVEGQNRYRLS.

The chain is F-box protein At1g47056 from Arabidopsis thaliana (Mouse-ear cress).